The following is a 351-amino-acid chain: MQRALPGARQHLGAILSSASVVVKALCAAVLFLYLLSFAVDTGCLAVTPGYLFPPNFWIWTLATHGLMEQHVWDVAISLATVVVAGRLLEPLWGALELLIFFSVVNVSVGLLGAFAYLLTYMASFNLVYLFTVRIHGALGFLGGVLVALKQTMGDCVVLRVPQVRVSVVPMLLLGLLLLLRLATLLQSPALASYGFGLISSWVYLRFYQRHSRGRGDMADHFAFATFFPEILQPVVGLLANLVHGLLVKVKICQKTVKRYDVGAPSSITISLPGTDPQDAERRRQLALKALNERLKRVEDQSVWPSMDDDEEEAGAKVDSPMPSDKAPTLPGKGAVPESSLITFEAAPPTL.

At 1–19 (MQRALPGARQHLGAILSSA) the chain is on the cytoplasmic side. The segment at 1–205 (MQRALPGARQ…FGLISSWVYL (205 aa)) is mediates homooligomerization. Residues 20–40 (SVVVKALCAAVLFLYLLSFAV) form a helical membrane-spanning segment. The Lumenal portion of the chain corresponds to 41–97 (DTGCLAVTPGYLFPPNFWIWTLATHGLMEQHVWDVAISLATVVVAGRLLEPLWGALE). The chain crosses the membrane as a helical span at residues 98-118 (LLIFFSVVNVSVGLLGAFAYL). Residues 119–126 (LTYMASFN) lie on the Cytoplasmic side of the membrane. The helical transmembrane segment at 127–147 (LVYLFTVRIHGALGFLGGVLV) threads the bilayer. Over 148 to 165 (ALKQTMGDCVVLRVPQVR) the chain is Lumenal. The helical transmembrane segment at 166 to 186 (VSVVPMLLLGLLLLLRLATLL) threads the bilayer. Residues 187–351 (QSPALASYGF…ITFEAAPPTL (165 aa)) lie on the Cytoplasmic side of the membrane. The mediates localization to the Golgi stretch occupies residues 206–229 (RFYQRHSRGRGDMADHFAFATFFP). The tract at residues 300-351 (DQSVWPSMDDDEEEAGAKVDSPMPSDKAPTLPGKGAVPESSLITFEAAPPTL) is disordered. Thr-329 is subject to Phosphothreonine.

The protein belongs to the TMEM115 family. In terms of assembly, homooligomer. Interacts with COPB1. May interact with LMAN1. Interacts with the COG complex; probably through COG3.

It is found in the golgi apparatus. Its subcellular location is the golgi stack membrane. May play a role in retrograde transport of proteins from the Golgi to the endoplasmic reticulum. May indirectly play a role in protein glycosylation in the Golgi. The protein is Transmembrane protein 115 of Bos taurus (Bovine).